Consider the following 98-residue polypeptide: Keratin-associated protein 3-1 (98 aa).

The residue at position 2 (Ala2) is an N-acetylalanine. Tandem repeats lie at residues Cys3 to Arg7, Cys8 to Arg12, Phe47 to Ser51, and Tyr55 to Asp59. Residues Cys3–Asp59 are 4 X 5 AA repeats of C-C-X(3).

It belongs to the KRTAP type 3 family. Interacts with wool keratins. As to expression, wool.

Functionally, in the wool cortex, wool keratin intermediate filaments are embedded in an interfilamentous matrix, consisting of hair keratin-associated proteins (KRTAP), which are essential for the formation of a rigid and resistant wool shaft through their extensive disulfide bond cross-linking with abundant cysteine residues of wool keratins. The matrix proteins include the high-sulfur and high-glycine-tyrosine keratins. In Capra hircus (Goat), this protein is Keratin-associated protein 3-1 (KRTAP3-1).